We begin with the raw amino-acid sequence, 451 residues long: Type 3 secretion system ATPase (451 aa).

184–189 (GGGKST) lines the ATP pocket.

The protein belongs to the ATPase alpha/beta chains family. T3SS ATPase subfamily. In terms of assembly, the core secretion machinery of the T3SS is composed of approximately 20 different proteins, including cytoplasmic components, a base, an export apparatus and a needle. This subunit is part of the cytosolic complex. Forms homohexamers.

Its subcellular location is the cytoplasm. It carries out the reaction ATP + H2O + cellular proteinSide 1 = ADP + phosphate + cellular proteinSide 2.. Its function is as follows. ATPase component of the type III secretion system (T3SS), also called injectisome, which is used to inject bacterial effector proteins into eukaryotic host cells. Acts as a molecular motor to provide the energy that is required for the export of proteins. Required for type III secretion apparatus (T3SA) formation, proper protein secretion, host cell invasion and virulence. May play a critical role in T3SS substrate recognition, disassembly of the effector/chaperone complex and unfolding of the effector in an ATP-dependent manner prior to secretion. The chain is Type 3 secretion system ATPase from Sinorhizobium fredii (strain NBRC 101917 / NGR234).